The chain runs to 1265 residues: Cohesin subunit SA-1 (1265 aa).

Residues 1–16 (MITSELSVLQDSTNES) show a composition bias toward polar residues. Disordered regions lie at residues 1-21 (MITS…VMHT) and 37-91 (DLEV…EGDP). The segment covering 62 to 73 (TPGDRSRAEPGS) has biased composition (basic and acidic residues). The 86-residue stretch at 303-388 (FVHRYRDAIA…NRFKDRIVSM (86 aa)) folds into the SCD domain. 2 disordered regions span residues 1063–1097 (GDED…KRVI) and 1111–1130 (DTIQ…TVLR). Positions 1069–1082 (SVNSGGSNSKGSSV) are enriched in low complexity. Positions 1083–1095 (RSKKGRPPLHKKR) are enriched in basic residues. Polar residues predominate over residues 1111-1129 (DTIQTPGALTTPQLTSTVL).

This sequence belongs to the SCC3 family. As to quaternary structure, interacts directly with RAD21 in cohesin complex. Cohesin complexes are composed of a heterodimer between and SMC3, which are attached via their hinge domain, and RAD21 which link them at their heads, and one STAG protein (STAG1 OR STAG2). In cohesin complexes, STAG1 is mutually exclusive with STAG2. Post-translationally, phosphorylated by PLK1. The large dissociation of cohesin from chromosome arms during prophase is partly due to its phosphorylation.

It localises to the nucleus. The protein localises to the chromosome. It is found in the centromere. Its function is as follows. Component of cohesin complex, a complex required for the cohesion of sister chromatids after DNA replication. The cohesin complex apparently forms a large proteinaceous ring within which sister chromatids can be trapped. At anaphase, the complex is cleaved and dissociates from chromatin, allowing sister chromatids to segregate. The cohesin complex may also play a role in spindle pole assembly during mitosis. This Xenopus laevis (African clawed frog) protein is Cohesin subunit SA-1 (stag1).